We begin with the raw amino-acid sequence, 149 residues long: Large ribosomal subunit protein uL30 (149 aa).

It belongs to the universal ribosomal protein uL30 family. Part of the 50S ribosomal subunit.

This chain is Large ribosomal subunit protein uL30, found in Methanopyrus kandleri (strain AV19 / DSM 6324 / JCM 9639 / NBRC 100938).